Reading from the N-terminus, the 189-residue chain is Lipid A acyltransferase PagP (189 aa).

The first 24 residues, 1–24 (MLRRFSLFSLGFLGWLLVSGNASA), serve as a signal peptide directing secretion. Residues His61, Asp104, and Ser105 contribute to the active site.

The protein belongs to the lipid A palmitoyltransferase family. As to quaternary structure, homodimer.

The protein localises to the cell outer membrane. The catalysed reaction is a lipid A + a 1,2-diacyl-sn-glycero-3-phosphocholine = a hepta-acyl lipid A + a 2-acyl-sn-glycero-3-phosphocholine. The enzyme catalyses a lipid IVA + a 1,2-diacyl-sn-glycero-3-phosphocholine = a lipid IVB + a 2-acyl-sn-glycero-3-phosphocholine. It carries out the reaction a lipid IIA + a 1,2-diacyl-sn-glycero-3-phosphocholine = a lipid IIB + a 2-acyl-sn-glycero-3-phosphocholine. In terms of biological role, transfers a fatty acid residue from the sn-1 position of a phospholipid to the N-linked hydroxyfatty acid chain on the proximal unit of lipid A or its precursors. In Klebsiella pneumoniae subsp. pneumoniae (strain ATCC 700721 / MGH 78578), this protein is Lipid A acyltransferase PagP.